The chain runs to 593 residues: Genetic interactor of prohibitins 3, mitochondrial (593 aa).

A mitochondrion-targeting transit peptide spans 1-61; the sequence is MLGRIRPFVR…NPSKPGFYRP (61 aa). The 208-residue stretch at 142–349 folds into the CP-type G domain; sequence VESIDKIMST…IVDVPGFSAN (208 aa).

Belongs to the TRAFAC class YlqF/YawG GTPase family. GEP3 subfamily.

The protein resides in the mitochondrion. May be involved in the mitochondrial lipid metabolism. This chain is Genetic interactor of prohibitins 3, mitochondrial (GEP3), found in Debaryomyces hansenii (strain ATCC 36239 / CBS 767 / BCRC 21394 / JCM 1990 / NBRC 0083 / IGC 2968) (Yeast).